We begin with the raw amino-acid sequence, 125 residues long: Ribonuclease P protein component (125 aa).

The protein belongs to the RnpA family. In terms of assembly, consists of a catalytic RNA component (M1 or rnpB) and a protein subunit.

The catalysed reaction is Endonucleolytic cleavage of RNA, removing 5'-extranucleotides from tRNA precursor.. In terms of biological role, RNaseP catalyzes the removal of the 5'-leader sequence from pre-tRNA to produce the mature 5'-terminus. It can also cleave other RNA substrates such as 4.5S RNA. The protein component plays an auxiliary but essential role in vivo by binding to the 5'-leader sequence and broadening the substrate specificity of the ribozyme. This chain is Ribonuclease P protein component, found in Ruegeria pomeroyi (strain ATCC 700808 / DSM 15171 / DSS-3) (Silicibacter pomeroyi).